Reading from the N-terminus, the 145-residue chain is Large ribosomal subunit protein uL15 (145 aa).

Positions 1–58 (MFSLLKPKGAAKRRKIVGRGPGSGLGKTSGRGQKGQKARNTSPRLGFEGGQTPLYRRL) are disordered. Residues 19-33 (RGPGSGLGKTSGRGQ) are compositionally biased toward gly residues.

Belongs to the universal ribosomal protein uL15 family. As to quaternary structure, part of the 50S ribosomal subunit.

Functionally, binds to the 23S rRNA. The chain is Large ribosomal subunit protein uL15 from Borreliella afzelii (strain PKo) (Borrelia afzelii).